The following is a 112-amino-acid chain: Pediocin PA-1 immunity protein (112 aa).

Functionally, imparts immunity to pediocin PA-1/ACH to naturally sensitive host strains. This is Pediocin PA-1 immunity protein (pedB) from Pediococcus acidilactici.